The chain runs to 156 residues: Zinc metalloproteinase-disintegrin jararin (156 aa).

One can recognise a Peptidase M12B domain in the interval F1 to P67. H8 contributes to the Zn(2+) binding site. Residue E9 is part of the active site. Zn(2+) is bound at residue H12. 9 disulfides stabilise this stretch: C23/C47, C25/C30, C78/C97, C89/C107, C91/C102, C101/C124, C115/C121, C120/C145, and C133/C152. In terms of domain architecture, Disintegrin spans P75 to S156. Positions G136–C145 are enriched in basic and acidic residues. The tract at residues G136–S156 is disordered. Positions R137 to D139 match the Cell attachment site motif. Over residues T146–S156 the composition is skewed to polar residues.

This sequence belongs to the venom metalloproteinase (M12B) family. P-II subfamily. P-IIb sub-subfamily. Monomer. The cofactor is Zn(2+). As to expression, expressed by the venom gland.

It localises to the secreted. Its function is as follows. Snake venom zinc metalloproteinase that inhibits ADP-induced platelet aggregation (probably by binding integrin alpha-IIb/beta-3 (ITGA2B/ITGB3)) and degrades fibrinogen. The chain is Zinc metalloproteinase-disintegrin jararin from Bothrops jararaca (Jararaca).